We begin with the raw amino-acid sequence, 192 residues long: Peptidyl-tRNA hydrolase (192 aa).

Tyrosine 17 is a binding site for tRNA. The active-site Proton acceptor is histidine 22. TRNA contacts are provided by phenylalanine 68, asparagine 70, and asparagine 116.

This sequence belongs to the PTH family. In terms of assembly, monomer.

It localises to the cytoplasm. It catalyses the reaction an N-acyl-L-alpha-aminoacyl-tRNA + H2O = an N-acyl-L-amino acid + a tRNA + H(+). Hydrolyzes ribosome-free peptidyl-tRNAs (with 1 or more amino acids incorporated), which drop off the ribosome during protein synthesis, or as a result of ribosome stalling. In terms of biological role, catalyzes the release of premature peptidyl moieties from peptidyl-tRNA molecules trapped in stalled 50S ribosomal subunits, and thus maintains levels of free tRNAs and 50S ribosomes. In Hydrogenovibrio crunogenus (strain DSM 25203 / XCL-2) (Thiomicrospira crunogena), this protein is Peptidyl-tRNA hydrolase.